A 129-amino-acid polypeptide reads, in one-letter code: UPF0212 protein Mbar_A2902 (129 aa).

The protein belongs to the UPF0212 family.

The polypeptide is UPF0212 protein Mbar_A2902 (Methanosarcina barkeri (strain Fusaro / DSM 804)).